A 424-amino-acid polypeptide reads, in one-letter code: Adenylosuccinate synthetase (424 aa).

GTP-binding positions include 12–18 and 40–42; these read GDEGKGK and GHT. The active-site Proton acceptor is the Asp-13. Mg(2+) is bound by residues Asp-13 and Gly-40. Residues 13–16, 38–41, Thr-130, Arg-144, Asn-220, Thr-235, and Arg-299 each bind IMP; these read DEGK and NAGH. The Proton donor role is filled by His-41. A substrate-binding site is contributed by 295–301; it reads VTTGRRR. Residues Arg-301, 327–329, and 412–414 each bind GTP; these read KLD and GTG.

The protein belongs to the adenylosuccinate synthetase family. Homodimer. It depends on Mg(2+) as a cofactor.

It is found in the cytoplasm. The enzyme catalyses IMP + L-aspartate + GTP = N(6)-(1,2-dicarboxyethyl)-AMP + GDP + phosphate + 2 H(+). The protein operates within purine metabolism; AMP biosynthesis via de novo pathway; AMP from IMP: step 1/2. Functionally, plays an important role in the de novo pathway and in the salvage pathway of purine nucleotide biosynthesis. Catalyzes the first committed step in the biosynthesis of AMP from IMP. This chain is Adenylosuccinate synthetase, found in Neosartorya fischeri (strain ATCC 1020 / DSM 3700 / CBS 544.65 / FGSC A1164 / JCM 1740 / NRRL 181 / WB 181) (Aspergillus fischerianus).